A 320-amino-acid chain; its full sequence is Small ribosomal subunit protein uS2 (320 aa).

Over residues 1–22 (MADETTTDTPDVQDEDAPDEDA) the composition is skewed to acidic residues. The disordered stretch occupies residues 1–83 (MADETTTDTP…SSSEEETSHR (83 aa)). Residues 27 to 41 (DDTASDSTGEAAAAD) show a composition bias toward low complexity. 2 stretches are compositionally biased toward acidic residues: residues 42-57 (TDAD…EDAP) and 65-78 (DDGD…SSEE).

This sequence belongs to the universal ribosomal protein uS2 family.

The protein is Small ribosomal subunit protein uS2 of Salinibacter ruber (strain DSM 13855 / M31).